The chain runs to 264 residues: Neurexophilin-2 (264 aa).

The N-terminal stretch at 1 to 22 (MRLRPLPLVVVPGLLQLLFCDS) is a signal peptide. The segment at 23 to 90 (EKVVHATEGL…WDWLANITEV (68 aa)) is II. Residues asparagine 86, asparagine 139, asparagine 149, and asparagine 155 are each glycosylated (N-linked (GlcNAc...) asparagine). Positions 91 to 169 (QEPLARTKRR…LVPPSKVVEF (79 aa)) are III. Residues 170-178 (EVSPQSTLE) form an IV (linker domain) region. Residues 179 to 264 (TKESKSFNCR…HSETPYLSSG (86 aa)) are v (Cys-rich).

Belongs to the neurexophilin family. May be proteolytically processed at the boundary between the N-terminal non-conserved and the central conserved domain in neuron-like cells. As to expression, brain, only in a scattered subpopulation of neurons that probably represent inhibitory interneurons.

It is found in the secreted. In terms of biological role, may be signaling molecules that resemble neuropeptides and that act by binding to alpha-neurexins and possibly other receptors. This chain is Neurexophilin-2 (NXPH2), found in Bos taurus (Bovine).